The sequence spans 642 residues: Nocturnin (642 aa).

Residues 50-87 (LEDDDKPPQLFSVTDEPPSPNEEDYKPPNHHEDDGKLA) form a disordered region. Residues 72–87 (EDYKPPNHHEDDGKLA) show a composition bias toward basic and acidic residues. E363 serves as a coordination point for Mg(2+). Substrate-binding positions include E363, N430, 453–456 (HLKA), 491–493 (DFN), and H600. Residues 611–642 (PPTENGKESGSGSGSDGENETEVEGSKHGSIQ) are disordered.

Belongs to the CCR4/nocturin family. Associates to the CCR4-NOT complex composed of at least Pop2/Caf1-55, Ccr4, Not1, Rga/Not2, and Not3. Requires Mg(2+) as cofactor. As to expression, expressed in the head, in the dorsal neurons DN3, a subgroup of clock neurons (at protein level). Ubiquitously expressed in both males and females.

It is found in the cytoplasm. The catalysed reaction is NADP(+) + H2O = phosphate + NAD(+). The enzyme catalyses NADPH + H2O = phosphate + NADH. Its function is as follows. Phosphatase which catalyzes the conversion of NADP(+) to NAD(+) and of NADPH to NADH. Shows a small preference for NADPH over NADP(+). Because of its association with the CCR4-NOT complex, has a role in mRNA deadenylation and decay. Required at the pupal stage for proper wing morphogenesis after eclosion. Functionally, doesn't have a role in light-mediated behavioral response. In dorsal neurons, contributes to the light-mediated behavioral response. The polypeptide is Nocturnin (Drosophila melanogaster (Fruit fly)).